The chain runs to 146 residues: Small ribosomal subunit protein uS5 (146 aa).

One can recognise an S5 DRBM domain in the interval 8 to 71; it reads FEEVIVNIGR…DDAFKNIIDV (64 aa).

The protein belongs to the universal ribosomal protein uS5 family. As to quaternary structure, part of the 30S ribosomal subunit. Contacts proteins S4 and S8.

Its function is as follows. With S4 and S12 plays an important role in translational accuracy. Located at the back of the 30S subunit body where it stabilizes the conformation of the head with respect to the body. The chain is Small ribosomal subunit protein uS5 from Campylobacter hominis (strain ATCC BAA-381 / DSM 21671 / CCUG 45161 / LMG 19568 / NCTC 13146 / CH001A).